Here is a 545-residue protein sequence, read N- to C-terminus: Monocarboxylate transporter 8 (545 aa).

The disordered stretch occupies residues 1-98; the sequence is MALPSPASEE…VETRGTARGF (98 aa). At Ala-2 the chain carries N-acetylalanine. The Cytoplasmic portion of the chain corresponds to 2-102; sequence ALPSPASEEA…GTARGFQPPE (101 aa). A run of 2 repeats spans residues 29–50 and 51–72. The 2 X 22 AA approximate tandem repeats stretch occupies residues 29–72; that stretch reads PVPEPEPEPEPEPEPEPEPVPVPPPEPQPEPEPQPLPDPAPLPV. Residues 33-45 are compositionally biased toward acidic residues; sequence PEPEPEPEPEPEP. A compositionally biased stretch (pro residues) spans 46-70; it reads EPVPVPPPEPQPEPEPQPLPDPAPL. A helical transmembrane segment spans residues 103-123; the sequence is GGFGWIVVFAATWCNGSIFGI. The Extracellular portion of the chain corresponds to 124–149; that stretch reads HNSVGILYSMLLEEEKEKNRQVEFQA. The chain crosses the membrane as a helical span at residues 150-170; that stretch reads AWVGALAMGMIFFCSPIVSIF. The Cytoplasmic portion of the chain corresponds to 171-181; it reads TDRLGCRITAT. Residues 182 to 202 traverse the membrane as a helical segment; it reads TGAAVAFIGLHTSSFTSSLSL. Topologically, residues 203 to 204 are extracellular; sequence RY. Residues 205-225 form a helical membrane-spanning segment; sequence FTYGILFGCGCSFAFQPSLVI. Over 226–235 the chain is Cytoplasmic; sequence LGHYFQRRLG. A helical transmembrane segment spans residues 236 to 256; the sequence is LANGVVSAGSSIFSMSFPFLI. Residues 257-264 are Extracellular-facing; it reads KMLGDRIK. Residues 265-285 traverse the membrane as a helical segment; that stretch reads LAQTFQVLSTFMFVLTLLSLT. At 286-328 the chain is on the cytoplasmic side; it reads YRPLLPSSQDTPSKRGAHTLRQRFLVQFRKYFNMRVFRQRTYR. Residues 329–349 form a helical membrane-spanning segment; it reads IWAFGIAAAALGYFVPYVHLM. Residues 350–362 are Extracellular-facing; that stretch reads KYVEDKFKEIKET. A helical membrane pass occupies residues 363–383; the sequence is WVLLVCIGATSGLGRLVSGHI. Topologically, residues 384-392 are cytoplasmic; sequence SDSIPGLKK. The helical transmembrane segment at 393 to 413 threads the bilayer; sequence IYLQVLSFLLLGLMSMMIPLC. Residues 414 to 415 are Extracellular-facing; sequence RD. The helical transmembrane segment at 416 to 436 threads the bilayer; it reads FGGLIVVCLFLGLCDGFFITI. Residues 437–453 lie on the Cytoplasmic side of the membrane; sequence MAPIAFELVGPMQASQA. Residues 454-474 traverse the membrane as a helical segment; the sequence is IGYLLGMMALPMIAGPPIAGL. The Extracellular segment spans residues 475–483; it reads LRNCFGNYH. A helical transmembrane segment spans residues 484 to 504; that stretch reads VAFYFAGVPPIIGAVILFFVP. The Cytoplasmic segment spans residues 505–545; sequence LMHQRMFKKEQRESSKDKMLSHDPDPNGELLPGSPTPEEPI. A compositionally biased stretch (basic and acidic residues) spans 514–529; sequence EQRESSKDKMLSHDPD. The segment at 514 to 545 is disordered; that stretch reads EQRESSKDKMLSHDPDPNGELLPGSPTPEEPI. Residue Thr-540 is modified to Phosphothreonine.

It belongs to the major facilitator superfamily. Monocarboxylate porter (TC 2.A.1.13) family. Monomer. Homodimer. Homooligomer. Expressed at highest levels in liver, lower levels in brain, kidney and heart (at protein level). Expressed in microvessels of the blood-brain barrier (BBB) (at protein level).

The protein localises to the cell membrane. It is found in the apical cell membrane. It catalyses the reaction 3,3',5-triiodo-L-thyronine(out) = 3,3',5-triiodo-L-thyronine(in). The enzyme catalyses 3,3',5'-triiodo-L-thyronine(out) = 3,3',5'-triiodo-L-thyronine(in). It carries out the reaction L-thyroxine(out) = L-thyroxine(in). The catalysed reaction is 3,3'-diiodo-L-thyronine(out) = 3,3'-diiodo-L-thyronine(in). Functionally, specific thyroid hormone transmembrane transporter, that mediates both uptake and efflux of thyroid hormone across the cell membrane independently of pH or a Na(+) gradient. Major substrates are the iodothyronines T3 and T4 and to a lesser extent rT3 and 3,3-diiodothyronine (3,3'-T2). Acts as an important mediator of thyroid hormone transport, especially T3, through the blood-brain barrier. This is Monocarboxylate transporter 8 (SLC16A2) from Rattus norvegicus (Rat).